The chain runs to 288 residues: Ribosomal RNA small subunit methyltransferase I (288 aa).

The protein belongs to the methyltransferase superfamily. RsmI family.

The protein localises to the cytoplasm. It carries out the reaction cytidine(1402) in 16S rRNA + S-adenosyl-L-methionine = 2'-O-methylcytidine(1402) in 16S rRNA + S-adenosyl-L-homocysteine + H(+). Functionally, catalyzes the 2'-O-methylation of the ribose of cytidine 1402 (C1402) in 16S rRNA. This Vibrio cholerae serotype O1 (strain ATCC 39315 / El Tor Inaba N16961) protein is Ribosomal RNA small subunit methyltransferase I.